The following is a 668-amino-acid chain: Transketolase 1 (668 aa).

H26 contacts substrate. Thiamine diphosphate is bound by residues H66 and G114–L116. D155 provides a ligand contact to Mg(2+). Positions 156 and 185 each coordinate thiamine diphosphate. Residues N185 and I187 each contribute to the Mg(2+) site. Substrate-binding residues include H261, R358, and S385. Residue H261 participates in thiamine diphosphate binding. E413 (proton donor) is an active-site residue. F439 is a thiamine diphosphate binding site. Residues H463, D471, and R522 each coordinate substrate.

The protein belongs to the transketolase family. In terms of assembly, homodimer. It depends on Mg(2+) as a cofactor. Ca(2+) is required as a cofactor. The cofactor is Mn(2+). Requires Co(2+) as cofactor. Thiamine diphosphate serves as cofactor.

The catalysed reaction is D-sedoheptulose 7-phosphate + D-glyceraldehyde 3-phosphate = aldehydo-D-ribose 5-phosphate + D-xylulose 5-phosphate. Functionally, catalyzes the transfer of a two-carbon ketol group from a ketose donor to an aldose acceptor, via a covalent intermediate with the cofactor thiamine pyrophosphate. The chain is Transketolase 1 (tktA) from Pasteurella multocida (strain Pm70).